Here is a 159-residue protein sequence, read N- to C-terminus: 6,7-dimethyl-8-ribityllumazine synthase (159 aa).

5-amino-6-(D-ribitylamino)uracil is bound by residues tryptophan 27, 62-64 (SWE), and 86-88 (VLI). 91–92 (ST) contributes to the (2S)-2-hydroxy-3-oxobutyl phosphate binding site. The active-site Proton donor is the histidine 94. Leucine 119 contributes to the 5-amino-6-(D-ribitylamino)uracil binding site. A (2S)-2-hydroxy-3-oxobutyl phosphate-binding site is contributed by arginine 133.

As to quaternary structure, homopentamer.

It carries out the reaction (2S)-2-hydroxy-3-oxobutyl phosphate + 5-amino-6-(D-ribitylamino)uracil = 6,7-dimethyl-8-(1-D-ribityl)lumazine + phosphate + 2 H2O + H(+). It functions in the pathway cofactor biosynthesis; riboflavin biosynthesis; riboflavin from 2-hydroxy-3-oxobutyl phosphate and 5-amino-6-(D-ribitylamino)uracil: step 1/2. Its activity is regulated as follows. Competitively inhibited by riboflavin (Ki of 17 uM). Catalyzes the formation of 6,7-dimethyl-8-ribityllumazine by condensation of 5-amino-6-(D-ribitylamino)uracil with 3,4-dihydroxy-2-butanone 4-phosphate. This is the penultimate step in the biosynthesis of riboflavin. Also binds riboflavin with an unexpected high affinity. This Schizosaccharomyces pombe (strain 972 / ATCC 24843) (Fission yeast) protein is 6,7-dimethyl-8-ribityllumazine synthase (rib4).